The chain runs to 1084 residues: Cellulose synthase A catalytic subunit 2 [UDP-forming] (1084 aa).

The residue at position 1 (M1) is an N-acetylmethionine. Residues 1 to 278 are Cytoplasmic-facing; the sequence is MNTGGRLIAG…RSSRINPYRM (278 aa). Residues C39, C42, C58, C61, C66, C69, C81, and C84 each contribute to the Zn(2+) site. The RING-type; degenerate zinc-finger motif lies at 39–85; it reads CQICGDEIELTVSSELFVACNECAFPVCRPCYEYERREGNQACPQCK. Residues 230–259 form a disordered region; sequence IKHEGGNNGRGSNDDDELDDPDMPMMDEGR. The helical transmembrane segment at 279 to 299 threads the bilayer; that stretch reads LILCRLAILGLFFHYRILHPV. Topologically, residues 300–301 are extracellular; it reads ND. Residues 302 to 322 form a helical membrane-spanning segment; the sequence is AYGLWLTSVICEIWFAVSWIL. The Cytoplasmic segment spans residues 323–867; the sequence is DQFPKWYPIE…INSVVYPWTS (545 aa). The UDP-alpha-D-glucose site is built by S361, K367, E368, and D397. D397 is a catalytic residue. Residues 451 to 477 are a coiled coil; the sequence is VRERRAMKRDYEEFKVKINALVATAQK. K538 is a binding site for UDP-alpha-D-glucose. 2 residues coordinate Mn(2+): K539 and D563. The active site involves D784. Residues 868 to 888 traverse the membrane as a helical segment; that stretch reads LPLIVYCSLPAVCLLTGKFIV. Over 889–893 the chain is Extracellular; it reads PEISN. The helical transmembrane segment at 894–914 threads the bilayer; that stretch reads YAGILFMLMFISIAVTGILEM. Residues 915–929 are Cytoplasmic-facing; sequence QWGGVGIDDWWRNEQ. The helical transmembrane segment at 930 to 950 threads the bilayer; sequence FWVIGGASSHLFALFQGLLKV. The Extracellular segment spans residues 951–979; the sequence is LAGVNTNFTVTSKAADDGAFSELYIFKWT. N957 carries an N-linked (GlcNAc...) asparagine glycan. Residues 980–1000 form a helical membrane-spanning segment; that stretch reads TLLIPPTTLLIINIIGVIVGV. The Cytoplasmic segment spans residues 1001–1011; the sequence is SDAISNGYDSW. A helical membrane pass occupies residues 1012–1032; sequence GPLFGRLFFALWVIVHLYPFL. Residues 1033-1041 are Extracellular-facing; it reads KGMLGKQDK. A helical membrane pass occupies residues 1042 to 1062; it reads MPTIIVVWSILLASILTLLWV. Residues 1063 to 1084 lie on the Cytoplasmic side of the membrane; the sequence is RVNPFVAKGGPVLEICGLNCGN.

The protein belongs to the glycosyltransferase 2 family. Plant cellulose synthase subfamily. In terms of assembly, homodimer. Interaction through zinc finger domain. Mn(2+) serves as cofactor. Requires Zn(2+) as cofactor. In terms of tissue distribution, strongly and ubiquitously expressed. Localized in some dividing and expanding cells, as well as in vascular tissues.

It is found in the cell membrane. The enzyme catalyses [(1-&gt;4)-beta-D-glucosyl](n) + UDP-alpha-D-glucose = [(1-&gt;4)-beta-D-glucosyl](n+1) + UDP + H(+). It functions in the pathway glycan metabolism; plant cellulose biosynthesis. Functionally, catalytic subunit of cellulose synthase terminal complexes ('rosettes'), required for beta-1,4-glucan microfibril crystallization, a major mechanism of the cell wall formation. Involved in the primary cell wall formation. The polypeptide is Cellulose synthase A catalytic subunit 2 [UDP-forming] (Arabidopsis thaliana (Mouse-ear cress)).